Consider the following 324-residue polypeptide: Heat-inducible transcription repressor HrcA (324 aa).

It belongs to the HrcA family.

Its function is as follows. Negative regulator of class I heat shock genes (grpE-dnaK-dnaJ and groELS operons). Prevents heat-shock induction of these operons. This chain is Heat-inducible transcription repressor HrcA, found in Parasynechococcus marenigrum (strain WH8102).